Reading from the N-terminus, the 595-residue chain is Elongation factor 4 2 (595 aa).

Residues 4–187 (SHIRNFAIIA…AIKQRLPAPQ (184 aa)) form the tr-type G domain. GTP-binding positions include 16–21 (DHGKST) and 133–136 (NKVD).

The protein belongs to the TRAFAC class translation factor GTPase superfamily. Classic translation factor GTPase family. LepA subfamily.

It is found in the cell membrane. The catalysed reaction is GTP + H2O = GDP + phosphate + H(+). Required for accurate and efficient protein synthesis under certain stress conditions. May act as a fidelity factor of the translation reaction, by catalyzing a one-codon backward translocation of tRNAs on improperly translocated ribosomes. Back-translocation proceeds from a post-translocation (POST) complex to a pre-translocation (PRE) complex, thus giving elongation factor G a second chance to translocate the tRNAs correctly. Binds to ribosomes in a GTP-dependent manner. This chain is Elongation factor 4 2, found in Lactiplantibacillus plantarum (strain ATCC BAA-793 / NCIMB 8826 / WCFS1) (Lactobacillus plantarum).